The following is a 205-amino-acid chain: Small ribosomal subunit protein uS4 (205 aa).

The segment at 18–46 is disordered; it reads NIWGRPKSPVNRREYGPGQHGQRRKGKLS. The S4 RNA-binding domain maps to 94–154; sequence RRLDTVVFRA…EASKQLAVVL (61 aa).

It belongs to the universal ribosomal protein uS4 family. In terms of assembly, part of the 30S ribosomal subunit. Contacts protein S5. The interaction surface between S4 and S5 is involved in control of translational fidelity.

Functionally, one of the primary rRNA binding proteins, it binds directly to 16S rRNA where it nucleates assembly of the body of the 30S subunit. Its function is as follows. With S5 and S12 plays an important role in translational accuracy. This chain is Small ribosomal subunit protein uS4, found in Bradyrhizobium sp. (strain ORS 278).